Consider the following 258-residue polypeptide: Hemin import ATP-binding protein HmuV (258 aa).

An ABC transporter domain is found at 2–242; that stretch reads LTAEKLCVER…SKIEELYDFP (241 aa). 34–41 serves as a coordination point for ATP; sequence GANGAGKS.

Belongs to the ABC transporter superfamily. Heme (hemin) importer (TC 3.A.1.14.5) family. In terms of assembly, the complex is composed of two ATP-binding proteins (HmuV), two transmembrane proteins (HmuU) and a solute-binding protein (HmuT).

It is found in the cell inner membrane. Functionally, part of the ABC transporter complex HmuTUV involved in hemin import. Responsible for energy coupling to the transport system. The sequence is that of Hemin import ATP-binding protein HmuV from Hydrogenovibrio crunogenus (strain DSM 25203 / XCL-2) (Thiomicrospira crunogena).